The primary structure comprises 303 residues: N-acetyl-D-glucosamine kinase (303 aa).

Residues 4 to 11 (GFDIGGTK) and 133 to 140 (GVGGGLVL) each bind ATP. Residues histidine 157, cysteine 177, cysteine 179, and cysteine 184 each coordinate Zn(2+).

This sequence belongs to the ROK (NagC/XylR) family. NagK subfamily.

It catalyses the reaction N-acetyl-D-glucosamine + ATP = N-acetyl-D-glucosamine 6-phosphate + ADP + H(+). It functions in the pathway cell wall biogenesis; peptidoglycan recycling. Catalyzes the phosphorylation of N-acetyl-D-glucosamine (GlcNAc) derived from cell-wall degradation, yielding GlcNAc-6-P. The protein is N-acetyl-D-glucosamine kinase of Salmonella gallinarum (strain 287/91 / NCTC 13346).